The sequence spans 105 residues: Small ribosomal subunit protein uS10 (105 aa).

It belongs to the universal ribosomal protein uS10 family. In terms of assembly, part of the 30S ribosomal subunit.

Functionally, involved in the binding of tRNA to the ribosomes. This chain is Small ribosomal subunit protein uS10, found in Solidesulfovibrio magneticus (strain ATCC 700980 / DSM 13731 / RS-1) (Desulfovibrio magneticus).